A 483-amino-acid chain; its full sequence is Probable cytochrome P450 517A4 (483 aa).

A helical transmembrane segment spans residues 1-21 (MEIVNVLLFLIILFLVKDFVK). C429 is a binding site for heme.

Belongs to the cytochrome P450 family. It depends on heme as a cofactor.

It localises to the membrane. The sequence is that of Probable cytochrome P450 517A4 (cyp517A4) from Dictyostelium discoideum (Social amoeba).